We begin with the raw amino-acid sequence, 838 residues long: Leucine--tRNA ligase (838 aa).

Positions 36-46 match the 'HIGH' region motif; it reads PYPSGKIHMGH. The short motif at 611-615 is the 'KMSKS' region element; that stretch reads KMSKS. Residue Lys-614 participates in ATP binding.

Belongs to the class-I aminoacyl-tRNA synthetase family.

It is found in the cytoplasm. It catalyses the reaction tRNA(Leu) + L-leucine + ATP = L-leucyl-tRNA(Leu) + AMP + diphosphate. This is Leucine--tRNA ligase from Wolbachia pipientis wMel.